Reading from the N-terminus, the 465-residue chain is BTB/POZ and MATH domain-containing protein 4 (465 aa).

Positions 12-40 are disordered; the sequence is LQRQNPLQKSEQQRRNFEMPSPPTTTSLS. The 135-residue stretch at 46-180 folds into the MATH domain; that stretch reads NGSHSFTIKG…DDCLKINCTV (135 aa). A BTB domain is found at 216-282; sequence SDITFNVSGE…IYKDALIEDA (67 aa). Disordered regions lie at residues 395 to 429 and 441 to 465; these read SGGG…INGG and VNAN…ELED. A compositionally biased stretch (low complexity) spans 442–458; sequence NANGSGRNNNDNNNSDD.

This sequence belongs to the Tdpoz family. In terms of assembly, interacts with RAP2-4. Binds to MYB56 at the promoter of FLOWERING LOCUS T (FT). In terms of tissue distribution, ubiquitous.

It is found in the cytoplasm. It participates in protein modification; protein ubiquitination. May act as a substrate-specific adapter of an E3 ubiquitin-protein ligase complex (CUL3-RBX1-BTB) which mediates the ubiquitination and subsequent proteasomal degradation of target proteins. In Arabidopsis thaliana (Mouse-ear cress), this protein is BTB/POZ and MATH domain-containing protein 4 (BPM4).